Here is an 82-residue protein sequence, read N- to C-terminus: Small ribosomal subunit protein eS21 (82 aa).

This sequence belongs to the eukaryotic ribosomal protein eS21 family.

The sequence is that of Small ribosomal subunit protein eS21 (RPS21) from Cyanophora paradoxa.